Consider the following 459-residue polypeptide: Putrescine aminotransferase (459 aa).

Pyridoxal 5'-phosphate contacts are provided by residues 150–151 (GT) and Gln274. Position 300 is an N6-(pyridoxal phosphate)lysine (Lys300). Residue Thr332 coordinates pyridoxal 5'-phosphate.

The protein belongs to the class-III pyridoxal-phosphate-dependent aminotransferase family. Putrescine aminotransferase subfamily. Pyridoxal 5'-phosphate is required as a cofactor.

It carries out the reaction an alkane-alpha,omega-diamine + 2-oxoglutarate = an omega-aminoaldehyde + L-glutamate. It catalyses the reaction putrescine + 2-oxoglutarate = 1-pyrroline + L-glutamate + H2O. The catalysed reaction is cadaverine + 2-oxoglutarate = 5-aminopentanal + L-glutamate. The protein operates within amine and polyamine degradation; putrescine degradation; 4-aminobutanal from putrescine (transaminase route): step 1/1. Catalyzes the aminotransferase reaction from putrescine to 2-oxoglutarate, leading to glutamate and 4-aminobutanal, which spontaneously cyclizes to form 1-pyrroline. This is the first step in one of two pathways for putrescine degradation, where putrescine is converted into 4-aminobutanoate (gamma-aminobutyrate or GABA) via 4-aminobutanal. Also functions as a cadaverine transaminase in a a L-lysine degradation pathway to succinate that proceeds via cadaverine, glutarate and L-2-hydroxyglutarate. The polypeptide is Putrescine aminotransferase (Escherichia coli (strain SMS-3-5 / SECEC)).